Here is a 350-residue protein sequence, read N- to C-terminus: uncharacterized protein (350 aa).

The next 3 helical transmembrane spans lie at 10–30, 51–71, and 327–347; these read YSFI…EVIG, FAGI…VTLT, and ILSL…LKLF.

This sequence belongs to the 1-acyl-sn-glycerol-3-phosphate acyltransferase family.

Its subcellular location is the endoplasmic reticulum membrane. This is an uncharacterized protein from Schizosaccharomyces pombe (strain 972 / ATCC 24843) (Fission yeast).